A 178-amino-acid polypeptide reads, in one-letter code: ATP synthase subunit delta (178 aa).

It belongs to the ATPase delta chain family. As to quaternary structure, F-type ATPases have 2 components, F(1) - the catalytic core - and F(0) - the membrane proton channel. F(1) has five subunits: alpha(3), beta(3), gamma(1), delta(1), epsilon(1). F(0) has three main subunits: a(1), b(2) and c(10-14). The alpha and beta chains form an alternating ring which encloses part of the gamma chain. F(1) is attached to F(0) by a central stalk formed by the gamma and epsilon chains, while a peripheral stalk is formed by the delta and b chains.

The protein localises to the cell inner membrane. Its function is as follows. F(1)F(0) ATP synthase produces ATP from ADP in the presence of a proton or sodium gradient. F-type ATPases consist of two structural domains, F(1) containing the extramembraneous catalytic core and F(0) containing the membrane proton channel, linked together by a central stalk and a peripheral stalk. During catalysis, ATP synthesis in the catalytic domain of F(1) is coupled via a rotary mechanism of the central stalk subunits to proton translocation. This protein is part of the stalk that links CF(0) to CF(1). It either transmits conformational changes from CF(0) to CF(1) or is implicated in proton conduction. The sequence is that of ATP synthase subunit delta from Laribacter hongkongensis (strain HLHK9).